Here is a 439-residue protein sequence, read N- to C-terminus: sn-glycerol-3-phosphate-binding periplasmic protein UgpB (439 aa).

Positions 1-25 (MFNNSIHKVSICIALTLTFSANAMA) are cleaved as a signal peptide. Tyr-67, Glu-91, Ser-146, Ser-272, Gly-309, Tyr-348, and Arg-399 together coordinate sn-glycerol 3-phosphate.

This sequence belongs to the bacterial solute-binding protein 1 family. As to quaternary structure, the complex is composed of two ATP-binding proteins (UgpC), two transmembrane proteins (UgpA and UgpE) and a solute-binding protein (UgpB).

The protein localises to the periplasm. Functionally, part of the ABC transporter complex UgpBAEC involved in sn-glycerol-3-phosphate (G3P) import. Binds G3P. The protein is sn-glycerol-3-phosphate-binding periplasmic protein UgpB (ugpB) of Yersinia pseudotuberculosis serotype I (strain IP32953).